The chain runs to 523 residues: Frizzled-4 (523 aa).

The first 22 residues, 1 to 22, serve as a signal peptide directing secretion; it reads MGARSLTLLYLLCCLVVGLIAG. The Extracellular segment spans residues 23-198; the sequence is FGEEEERSCD…KCGYDSGLYN (176 aa). Residues 26 to 147 enclose the FZ domain; the sequence is EEERSCDPIR…NDHNHMCMEG (122 aa). 8 cysteine pairs are disulfide-bonded: Cys-31–Cys-92, Cys-39–Cys-85, Cys-76–Cys-114, Cys-103–Cys-144, Cys-107–Cys-131, Cys-167–Cys-186, Cys-190–Cys-268, and Cys-288–Cys-363. Asn-45 carries an N-linked (GlcNAc...) asparagine glycan. Asn-130 is a glycosylation site (N-linked (GlcNAc...) asparagine). Residues 199–229 form a helical membrane-spanning segment; that stretch reads RLSKEFTDIWMAVWASLCFISTAFTVLTFLI. Topologically, residues 230-235 are cytoplasmic; sequence DSSRFC. A helical transmembrane segment spans residues 236–261; it reads YPERPIIFLSMCYNIYSIAYIVRLTV. The Extracellular segment spans residues 262–285; that stretch reads GRERISCDFEEAAEPVLIQEGLKN. Residues 286–319 form a helical membrane-spanning segment; that stretch reads TGCAIIFLLMYFFGMASSIWWVILTLTWFLAAGL. Residues 320–322 lie on the Cytoplasmic side of the membrane; the sequence is KWG. Residues 323–351 traverse the membrane as a helical segment; the sequence is HEAIEMHSSYFHIAAWAIPAVKTIVILIM. At 352-369 the chain is on the extracellular side; the sequence is RLVDADELTGLCYVGNQN. Residues 370–396 traverse the membrane as a helical segment; sequence IDALTGFVVAPLFTYLVIGTLFIAAGL. Over 397–417 the chain is Cytoplasmic; it reads VALFKIRSNLQKDGTKTDKLE. Residues 418–443 traverse the membrane as a helical segment; the sequence is RLMVKIGVFSVLYTVPATCVIACYFY. Residues 444–459 are Extracellular-facing; it reads EVSNWNVFRYTADDSN. A helical membrane pass occupies residues 460–481; that stretch reads MAVEMLNIFMSLLVGITSGMWI. At 482-523 the chain is on the cytoplasmic side; sequence WSAKTLHTWQKCTNRLVNSGKVKRKKRVDGWVKPGKGNETVV. Positions 485-490 match the Lys-Thr-X-X-X-Trp motif, mediates interaction with the PDZ domain of Dvl family members motif; sequence KTLHTW. The PDZ-binding signature appears at 521–523; sequence TVV.

The protein belongs to the G-protein coupled receptor Fz/Smo family. In terms of assembly, interacts (via FZ domain) with tsku; tsku competes with wnt2b for binding to fzd4, inhibiting Wnt signaling and repressing peripheral eye development.

The protein resides in the cell membrane. In terms of biological role, receptor for Wnt proteins. Most frizzled receptors are coupled to the beta-catenin canonical signaling pathway, which leads to the activation of disheveled proteins, inhibition of GSK-3 kinase, nuclear accumulation of beta-catenin and activation of Wnt target genes. A second signaling pathway involving PKC and calcium fluxes has been seen for some family members, but it is not yet clear if it represents a distinct pathway or if it can be integrated in the canonical pathway, as PKC seems to be required for Wnt-mediated inactivation of GSK-3 kinase. Both pathways seem to involve interactions with G-proteins. May be involved in transduction and intercellular transmission of polarity information during tissue morphogenesis and/or in differentiated tissues. Activated by Wnt5A. This is Frizzled-4 (fzd4) from Xenopus laevis (African clawed frog).